The chain runs to 405 residues: Cytoplasmic tRNA 2-thiolation protein 2 (405 aa).

This sequence belongs to the CTU2/NCS2 family.

The protein localises to the cytoplasm. Its pathway is tRNA modification; 5-methoxycarbonylmethyl-2-thiouridine-tRNA biosynthesis. Plays a central role in 2-thiolation of mcm(5)S(2)U at tRNA wobble positions of tRNA(Lys), tRNA(Glu) and tRNA(Gln). May act by forming a heterodimer with NCS6/CTU1 that ligates sulfur from thiocarboxylated URM1 onto the uridine of tRNAs at wobble position. The chain is Cytoplasmic tRNA 2-thiolation protein 2 from Drosophila melanogaster (Fruit fly).